Consider the following 574-residue polypeptide: Urease subunit alpha (574 aa).

The 444-residue stretch at 131 to 574 (GAIDSHIHFI…LPMAQRYLLI (444 aa)) folds into the Urease domain. Ni(2+) contacts are provided by H136, H138, and K219. At K219 the chain carries N6-carboxylysine. A substrate-binding site is contributed by H221. Ni(2+) is bound by residues H248 and H274. H322 acts as the Proton donor in catalysis. Position 362 (D362) interacts with Ni(2+).

Belongs to the metallo-dependent hydrolases superfamily. Urease alpha subunit family. Heterotrimer of UreA (gamma), UreB (beta) and UreC (alpha) subunits. Three heterotrimers associate to form the active enzyme. It depends on Ni cation as a cofactor. Post-translationally, carboxylation allows a single lysine to coordinate two nickel ions.

The protein localises to the cytoplasm. The enzyme catalyses urea + 2 H2O + H(+) = hydrogencarbonate + 2 NH4(+). The protein operates within nitrogen metabolism; urea degradation; CO(2) and NH(3) from urea (urease route): step 1/1. This is Urease subunit alpha from Prochlorococcus marinus (strain MIT 9303).